The following is a 219-amino-acid chain: Swarming motility regulation protein RssB (219 aa).

One can recognise a Response regulatory domain in the interval asparagine 2–asparagine 116. Position 51 is a 4-aspartylphosphate (aspartate 51). A DNA-binding region (ompR/PhoB-type) is located at residues serine 124–lysine 218.

The protein resides in the cytoplasm. In terms of biological role, member of the two-component regulatory system RssA/RssB involved in regulation of swarming motility which has been shown to be inhibited by saturated fatty acids. RssA/RssB regulates cellular fatty acid composition, hemolysin production and cell surface topography. RssA/RssB negatively regulates the activity of SlhBA. It can also act as a negative regulator for the control of the swarming initiation. RssB binds its own promoter. The polypeptide is Swarming motility regulation protein RssB (rssB) (Serratia marcescens).